A 105-amino-acid chain; its full sequence is Large ribosomal subunit protein eL36 (105 aa).

It belongs to the eukaryotic ribosomal protein eL36 family. Component of the large ribosomal subunit.

It is found in the cytoplasm. It localises to the cytosol. Functionally, component of the large ribosomal subunit. The ribosome is a large ribonucleoprotein complex responsible for the synthesis of proteins in the cell. The polypeptide is Large ribosomal subunit protein eL36 (RPL36) (Hydrophis hardwickii (Hardwick's spine-bellied seasnake)).